The sequence spans 378 residues: Acetylornithine deacetylase (378 aa).

His76 lines the Zn(2+) pocket. The active site involves Asp78. A Zn(2+)-binding site is contributed by Asp108. Glu140 is an active-site residue. Residues Glu141, Glu165, and His351 each coordinate Zn(2+).

It belongs to the peptidase M20A family. ArgE subfamily. Homodimer. Requires Zn(2+) as cofactor. Co(2+) serves as cofactor. It depends on glutathione as a cofactor.

It localises to the cytoplasm. It catalyses the reaction N(2)-acetyl-L-ornithine + H2O = L-ornithine + acetate. Its pathway is amino-acid biosynthesis; L-arginine biosynthesis; L-ornithine from N(2)-acetyl-L-ornithine (linear): step 1/1. Functionally, catalyzes the hydrolysis of the amide bond of N(2)-acetylated L-amino acids. Cleaves the acetyl group from N-acetyl-L-ornithine to form L-ornithine, an intermediate in L-arginine biosynthesis pathway, and a branchpoint in the synthesis of polyamines. This is Acetylornithine deacetylase from Vibrio vulnificus (strain CMCP6).